A 185-amino-acid chain; its full sequence is TATA-box-binding protein 3 (185 aa).

2 tandem repeats follow at residues 7-84 and 100-178.

Belongs to the TBP family.

General factor that plays a role in the activation of archaeal genes transcribed by RNA polymerase. Binds specifically to the TATA box promoter element which lies close to the position of transcription initiation. The chain is TATA-box-binding protein 3 from Methanosarcina acetivorans (strain ATCC 35395 / DSM 2834 / JCM 12185 / C2A).